Consider the following 66-residue polypeptide: Large ribosomal subunit protein bL35 (66 aa).

2 stretches are compositionally biased toward basic residues: residues 1–16 and 31–45; these read MPKQKTHRASAKRFKR and HRFHGKTKKQRRQLR. The disordered stretch occupies residues 1–52; sequence MPKQKTHRASAKRFKRTGNGGLKRSNAYTSHRFHGKTKKQRRQLRKASMVSA.

Belongs to the bacterial ribosomal protein bL35 family.

In Ligilactobacillus salivarius (strain UCC118) (Lactobacillus salivarius), this protein is Large ribosomal subunit protein bL35.